Here is a 258-residue protein sequence, read N- to C-terminus: MPSSCVAAPATECRDLADPAPAPAHRVAIEWPRKRRARNWKPHLPRERLLERGPAALTDAELVALLLGTGGGGRDVFDSARALLARFGDSLRDMLDAQPGVFTTHPGIGDARAAVLIAVTEITRRALVEKARRRMPIDSPGAVEDYLRLRIGMRPYEVFVTLYLDARHGLIEVEESARGSLTRMAVYPREIVRRALMLNAASLIIAHNHPSGAVQPSAEDRRLTRVLHEALALVDAKLLDHVVVGTADTFSFARAGWL.

Positions 136–258 (PIDSPGAVED…TFSFARAGWL (123 aa)) constitute an MPN domain. Zn(2+) is bound by residues H207, H209, and D220. The JAMM motif signature appears at 207-220 (HNHPSGAVQPSAED).

Belongs to the UPF0758 family.

The sequence is that of UPF0758 protein Bcep1808_2579 from Burkholderia vietnamiensis (strain G4 / LMG 22486) (Burkholderia cepacia (strain R1808)).